The chain runs to 187 residues: Inosine triphosphate pyrophosphatase (187 aa).

11–16 contacts ITP; it reads TSNKNK. Residue E39 participates in Mg(2+) binding. Residues K51, 67 to 68, K84, 143 to 146, K164, and 169 to 170 contribute to the ITP site; these read DT, FGWD, and HR.

The protein belongs to the HAM1 NTPase family. As to quaternary structure, homodimer. Mg(2+) is required as a cofactor. The cofactor is Mn(2+).

The protein localises to the cytoplasm. Its subcellular location is the nucleus. It carries out the reaction ITP + H2O = IMP + diphosphate + H(+). The enzyme catalyses dITP + H2O = dIMP + diphosphate + H(+). It catalyses the reaction XTP + H2O = XMP + diphosphate + H(+). Pyrophosphatase that hydrolyzes non-canonical purine nucleotides such as inosine triphosphate (ITP), deoxyinosine triphosphate (dITP) or xanthosine 5'-triphosphate (XTP) to their respective monophosphate derivatives. The enzyme does not distinguish between the deoxy- and ribose forms. Probably excludes non-canonical purines from RNA and DNA precursor pools, thus preventing their incorporation into RNA and DNA and avoiding chromosomal lesions. This Aspergillus fumigatus (strain ATCC MYA-4609 / CBS 101355 / FGSC A1100 / Af293) (Neosartorya fumigata) protein is Inosine triphosphate pyrophosphatase.